Here is a 95-residue protein sequence, read N- to C-terminus: Defensin-like protein 232 (95 aa).

Residues 1 to 26 form the signal peptide; sequence MRCTTLIMVSFVVSCLLLSLVEESEA. Cystine bridges form between C33–C94, C43–C68, C51–C84, and C66–C86.

The protein belongs to the DEFL family. Flower buds.

It is found in the secreted. In Arabidopsis thaliana (Mouse-ear cress), this protein is Defensin-like protein 232 (SCRL23).